A 199-amino-acid chain; its full sequence is Probable cobalt-precorrin-6B C(15)-methyltransferase (decarboxylating) (199 aa).

Residues threonine 24, 48-52 (GCGTG), aspartate 72, and alanine 101 each bind S-adenosyl-L-methionine.

The protein belongs to the methyltransferase superfamily. Archaeal-type CbiT family.

The enzyme catalyses Co-precorrin-6B + S-adenosyl-L-methionine = Co-precorrin-7 + S-adenosyl-L-homocysteine + CO2. It functions in the pathway cofactor biosynthesis; adenosylcobalamin biosynthesis; cob(II)yrinate a,c-diamide from sirohydrochlorin (anaerobic route): step 8/10. In terms of biological role, catalyzes the methylation of C-15 in cobalt-precorrin-6B followed by the decarboxylation of C-12 to form cobalt-precorrin-7. In Saccharolobus solfataricus (strain ATCC 35092 / DSM 1617 / JCM 11322 / P2) (Sulfolobus solfataricus), this protein is Probable cobalt-precorrin-6B C(15)-methyltransferase (decarboxylating).